The sequence spans 150 residues: MAFHSMLLVFLAGLVFLTEAAPLVSHGSIDSKCPLMVKVLDAVRGSPAANVAIKVFKKTSDGDWQEFAAGKTTEFGEVHELTSDEKFVEGIYRVEFDTSSYWKALGLSPFHEYADVVFTANDSGHRHYTIAALLSPFSYSTTAVVSDPQE.

A signal peptide spans 1–20 (MAFHSMLLVFLAGLVFLTEA). A Sulfocysteine modification is found at C33. L-thyroxine-binding residues include K38, E77, and S140.

The protein belongs to the transthyretin family. Homotetramer. Dimer of dimers. In the homotetramer, subunits assemble around a central channel that can accommodate two ligand molecules. Interacts with RBP4. Sulfonation of the reactive cysteine Cys-33 enhances the stability of the native conformation of TTR, avoiding misassembly of the protein leading to amyloid formation. Strongly expressed in the brain, and to a lesser extent in the eye.

Its subcellular location is the secreted. Thyroid hormone-binding protein, with a much higher binding affinity for triiodothyronine (T3) than for thyroxine (T4). Probably transports triiodothyronine from the bloodstream to the brain. The chain is Transthyretin (TTR) from Crocodylus porosus (Saltwater crocodile).